We begin with the raw amino-acid sequence, 388 residues long: Succinate--CoA ligase [ADP-forming] subunit beta (388 aa).

ATP-binding positions include K46, 53-55 (GRG), E99, C102, and E107. 2 residues coordinate Mg(2+): N199 and D213. Substrate contacts are provided by residues N264 and 321-323 (GIV).

It belongs to the succinate/malate CoA ligase beta subunit family. In terms of assembly, heterotetramer of two alpha and two beta subunits. Mg(2+) is required as a cofactor.

It catalyses the reaction succinate + ATP + CoA = succinyl-CoA + ADP + phosphate. The enzyme catalyses GTP + succinate + CoA = succinyl-CoA + GDP + phosphate. It functions in the pathway carbohydrate metabolism; tricarboxylic acid cycle; succinate from succinyl-CoA (ligase route): step 1/1. In terms of biological role, succinyl-CoA synthetase functions in the citric acid cycle (TCA), coupling the hydrolysis of succinyl-CoA to the synthesis of either ATP or GTP and thus represents the only step of substrate-level phosphorylation in the TCA. The beta subunit provides nucleotide specificity of the enzyme and binds the substrate succinate, while the binding sites for coenzyme A and phosphate are found in the alpha subunit. The polypeptide is Succinate--CoA ligase [ADP-forming] subunit beta (Actinobacillus pleuropneumoniae serotype 7 (strain AP76)).